A 141-amino-acid polypeptide reads, in one-letter code: D-aminoacyl-tRNA deacylase (141 aa).

The Gly-cisPro motif, important for rejection of L-amino acids signature appears at 133 to 134; sequence GP.

The protein belongs to the DTD family. Homodimer.

It is found in the cytoplasm. It carries out the reaction glycyl-tRNA(Ala) + H2O = tRNA(Ala) + glycine + H(+). The catalysed reaction is a D-aminoacyl-tRNA + H2O = a tRNA + a D-alpha-amino acid + H(+). Its function is as follows. An aminoacyl-tRNA editing enzyme that deacylates mischarged D-aminoacyl-tRNAs. Also deacylates mischarged glycyl-tRNA(Ala), protecting cells against glycine mischarging by AlaRS. Acts via tRNA-based rather than protein-based catalysis; rejects L-amino acids rather than detecting D-amino acids in the active site. By recycling D-aminoacyl-tRNA to D-amino acids and free tRNA molecules, this enzyme counteracts the toxicity associated with the formation of D-aminoacyl-tRNA entities in vivo and helps enforce protein L-homochirality. The sequence is that of D-aminoacyl-tRNA deacylase from Kineococcus radiotolerans (strain ATCC BAA-149 / DSM 14245 / SRS30216).